Reading from the N-terminus, the 638-residue chain is Pentatricopeptide repeat-containing protein At3g49730 (638 aa).

PPR repeat units follow at residues 130-164 (SYEV…NPEL), 166-200 (EPEL…GLEP), 201-231 (DEYV…MREK), 235-269 (NLRY…GLEP), 270-304 (DIVV…GFEP), 305-340 (NVNC…GCEA), 341-375 (DIVT…GVMP), 376-410 (SQVT…GCHP), 411-445 (DLLI…GLSP), 446-480 (GVDT…GIFS), 483-513 (QYGT…ISNK), and 520-554 (NVSA…DLMP). Positions 604–638 (LIEKAKPKGNKEGKKKGTDHQRYKGRGERSRAKAL) are disordered.

It belongs to the PPR family. P subfamily.

This is Pentatricopeptide repeat-containing protein At3g49730 from Arabidopsis thaliana (Mouse-ear cress).